The following is a 314-amino-acid chain: Ribose-phosphate pyrophosphokinase (314 aa).

ATP contacts are provided by residues 37–39 and 96–97; these read DGE and RQ. The Mg(2+) site is built by histidine 131 and aspartate 170. Lysine 194 is an active-site residue. D-ribose 5-phosphate is bound by residues arginine 196, aspartate 220, and 224–228; that span reads DTGGT.

It belongs to the ribose-phosphate pyrophosphokinase family. Class I subfamily. In terms of assembly, homohexamer. It depends on Mg(2+) as a cofactor.

It is found in the cytoplasm. It catalyses the reaction D-ribose 5-phosphate + ATP = 5-phospho-alpha-D-ribose 1-diphosphate + AMP + H(+). It functions in the pathway metabolic intermediate biosynthesis; 5-phospho-alpha-D-ribose 1-diphosphate biosynthesis; 5-phospho-alpha-D-ribose 1-diphosphate from D-ribose 5-phosphate (route I): step 1/1. Its function is as follows. Involved in the biosynthesis of the central metabolite phospho-alpha-D-ribosyl-1-pyrophosphate (PRPP) via the transfer of pyrophosphoryl group from ATP to 1-hydroxyl of ribose-5-phosphate (Rib-5-P). This chain is Ribose-phosphate pyrophosphokinase, found in Vibrio cholerae serotype O1 (strain ATCC 39315 / El Tor Inaba N16961).